Here is a 428-residue protein sequence, read N- to C-terminus: Kynureninase (428 aa).

Pyridoxal 5'-phosphate is bound by residues T104, T105, 132 to 135 (FPSD), D213, H216, and Y238. The residue at position 239 (K239) is an N6-(pyridoxal phosphate)lysine. Residues W267 and T295 each contribute to the pyridoxal 5'-phosphate site.

Belongs to the kynureninase family. In terms of assembly, homodimer. Requires pyridoxal 5'-phosphate as cofactor.

It carries out the reaction L-kynurenine + H2O = anthranilate + L-alanine + H(+). The enzyme catalyses 3-hydroxy-L-kynurenine + H2O = 3-hydroxyanthranilate + L-alanine + H(+). The protein operates within amino-acid degradation; L-kynurenine degradation; L-alanine and anthranilate from L-kynurenine: step 1/1. It participates in cofactor biosynthesis; NAD(+) biosynthesis; quinolinate from L-kynurenine: step 2/3. Its function is as follows. Catalyzes the cleavage of L-kynurenine (L-Kyn) and L-3-hydroxykynurenine (L-3OHKyn) into anthranilic acid (AA) and 3-hydroxyanthranilic acid (3-OHAA), respectively. The sequence is that of Kynureninase from Bacillus cereus (strain ATCC 14579 / DSM 31 / CCUG 7414 / JCM 2152 / NBRC 15305 / NCIMB 9373 / NCTC 2599 / NRRL B-3711).